The chain runs to 163 residues: Peptidyl-prolyl cis-trans isomerase FKBP15-2 (163 aa).

An N-terminal signal peptide occupies residues 1-25 (MASKMSLRYSLFLIFFSLISLQGFA). The 89-residue stretch at 52-140 (GDTIKVHYRG…IFDTELIAVN (89 aa)) folds into the PPIase FKBP-type domain. A disordered region spans residues 142-163 (KPAGGEEYGGDEDDEGYGNDEL). The segment covering 149–163 (YGGDEDDEGYGNDEL) has biased composition (acidic residues). The short motif at 160–163 (NDEL) is the Prevents secretion from ER element.

Belongs to the FKBP-type PPIase family.

The protein resides in the endoplasmic reticulum lumen. The catalysed reaction is [protein]-peptidylproline (omega=180) = [protein]-peptidylproline (omega=0). Its function is as follows. PPIases accelerate the folding of proteins. It catalyzes the cis-trans isomerization of proline imidic peptide bonds in oligopeptides. This is Peptidyl-prolyl cis-trans isomerase FKBP15-2 (FKBP15-2) from Arabidopsis thaliana (Mouse-ear cress).